We begin with the raw amino-acid sequence, 329 residues long: UDP-3-O-acylglucosamine N-acyltransferase (329 aa).

His224 serves as the catalytic Proton acceptor.

It belongs to the transferase hexapeptide repeat family. LpxD subfamily. As to quaternary structure, homotrimer.

The enzyme catalyses a UDP-3-O-[(3R)-3-hydroxyacyl]-alpha-D-glucosamine + a (3R)-hydroxyacyl-[ACP] = a UDP-2-N,3-O-bis[(3R)-3-hydroxyacyl]-alpha-D-glucosamine + holo-[ACP] + H(+). Its pathway is bacterial outer membrane biogenesis; LPS lipid A biosynthesis. Functionally, catalyzes the N-acylation of UDP-3-O-acylglucosamine using 3-hydroxyacyl-ACP as the acyl donor. Is involved in the biosynthesis of lipid A, a phosphorylated glycolipid that anchors the lipopolysaccharide to the outer membrane of the cell. This Albidiferax ferrireducens (strain ATCC BAA-621 / DSM 15236 / T118) (Rhodoferax ferrireducens) protein is UDP-3-O-acylglucosamine N-acyltransferase.